Reading from the N-terminus, the 501-residue chain is Cytochrome P450 monooxygenase ccsG (501 aa).

The signal sequence occupies residues 1-28 (MMITLFTLAVVSIGFFLWWLLTVQPAVT). 2 N-linked (GlcNAc...) asparagine glycosylation sites follow: Asn115 and Asn154. Residue Cys443 participates in heme binding.

The protein belongs to the cytochrome P450 family. Heme is required as a cofactor.

It participates in mycotoxin biosynthesis. Cytochrome P450 monooxygenase; part of the gene cluster that mediates the biosynthesis of a family of the mycotoxins cytochalasins E and K. The hybrid PKS-NRPS synthetase ccsA and the enoyl reductase ccsC are responsible for fusion of phenylalanine with an octaketide backbone and subsequent release of the stable tetramic acid precursor. The polyketide synthase module (PKS) of the PKS-NRPS ccsA is responsible for the synthesis of the octaketide backbone. The downstream nonribosomal peptide synthetase (NRPS) amidates the carboxyl end of the octaketide with a phenylalanine. A reductase-like domain (R) at the C-terminus catalyzes the reductive release of the polyketide-amino acid intermediate. Because ccsA lacks a designated enoylreductase (ER) domain, the required activity is provided the enoyl reductase ccsC. Upon formation of the 11-membered carbocycle-fused perhydroisoindolone intermediate, a number of oxidative steps are required to afford the final cytochalasin E and K, including two hydroxylations at C17 and C18, one alcohol oxidation at C17, one epoxidation at C6 and C7 and two Baeyer-Villiger oxidations. The oxidative modification at C17, C18 and the C6-C7 epoxidation are likely to be catalyzed by the two cytochrome P450 oxygenases ccsD and ccsG. CcsD may be responsible for the epoxidation of the C6-C7 double bond. CcsG may be responsible for the successive oxidative modifications at C17 and C18. The double Baeyer-Villiger oxidations of ketocytochalasin to precytochalasin and cytochalasin Z(16) are among the final steps leading to cytochalasin E and K and are catalyzed by ccsB. The first oxygen insertion step follows that of the classic BVMO mechanism, generating the ester precytochalasin. Release of precytochalasin into an aqueous environment can generate the shunt product iso-precytochalasin through spontaneous isomerization. Alternatively, precytochalasin can undergo further oxidation by ccsB to yield the in-line carbonate-containing cytochalasin Z(16). Cytochalasin Z(16) is a precursor to cytochalasin E and cytochalasin K, whereas iso-precytochalasin is a precursor to cytochalasin Z(17) and rosellichalasin. The hydrolyase ccsE may catalyze hydrolysis of epoxide bond in cytochalasin E to afford cytochalasin K. The function of ccsF has not been assigned but it may play a role in post-PKS-NRPS biosynthetic step, resistance or transport of cytochalasins and related PKS-NRPS products. The protein is Cytochrome P450 monooxygenase ccsG of Aspergillus clavatus (strain ATCC 1007 / CBS 513.65 / DSM 816 / NCTC 3887 / NRRL 1 / QM 1276 / 107).